The sequence spans 480 residues: Glycerol 3-phosphate dehydrogenase (480 aa).

FAD contacts are provided by residues Ile12, Glu31, 40-41 (TT), and 45-47 (SAI). Residues Ser45 and His49 each coordinate sn-glycerol 3-phosphate. The active-site Proton acceptor is the His49. Val172 contacts FAD. Positions 249 and 310 each coordinate sn-glycerol 3-phosphate. 335 to 336 (IE) serves as a coordination point for FAD. Ser337 contacts sn-glycerol 3-phosphate. Ser341 is an FAD binding site. The [2Fe-2S] cluster site is built by Cys400, Cys402, Cys437, and Cys442.

[2Fe-2S] cluster is required as a cofactor.

It catalyses the reaction sn-glycerol 3-phosphate + A = dihydroxyacetone phosphate + AH2. The protein operates within polyol metabolism; glycerol degradation via glycerol kinase pathway; glycerone phosphate from sn-glycerol 3-phosphate (aerobic route): step 1/1. In terms of biological role, catalyzes the dehydrogenation of glycerol 3-phosphate to dihydroxyacetone phosphate. Is probably involved in anaerobic glycerol metabolism. Active in vitro with the artificial electron acceptor 2,6-dichlorophenolindophenol (DCPIP), but not with NAD or NADP. Also displays a very low oxidase activity in vitro on glycerol 3-phosphate with O2 as the electron acceptor, but this activity is most likely not physiological. This chain is Glycerol 3-phosphate dehydrogenase, found in Caloramator mitchellensis.